A 529-amino-acid chain; its full sequence is Ribonuclease Y (529 aa).

Residues 4-24 (GLIYISLEVLVACLITALIMY) form a helical membrane-spanning segment. Positions 216-297 (LTTRIALPCS…NRIEEVYHRV (82 aa)) constitute a KH domain. One can recognise an HD domain in the interval 342 to 435 (ALQHSKEVAL…VCAADALSAG (94 aa)).

This sequence belongs to the RNase Y family.

The protein localises to the cell membrane. In terms of biological role, endoribonuclease that initiates mRNA decay. The polypeptide is Ribonuclease Y (Helicobacter pylori (strain HPAG1)).